The sequence spans 322 residues: Cytochrome f (322 aa).

The signal sequence occupies residues 1–36 (MQKNRNTFSWVKEQMTRCISVSMMIYVITRASISNA). Heme is bound by residues tyrosine 37, cysteine 57, cysteine 60, and histidine 61. A helical membrane pass occupies residues 288 to 308 (IQGLLFFLASVILAQIFLVLK).

The protein belongs to the cytochrome f family. As to quaternary structure, the 4 large subunits of the cytochrome b6-f complex are cytochrome b6, subunit IV (17 kDa polypeptide, petD), cytochrome f and the Rieske protein, while the 4 small subunits are PetG, PetL, PetM and PetN. The complex functions as a dimer. It depends on heme as a cofactor.

It is found in the plastid. The protein localises to the chloroplast thylakoid membrane. Component of the cytochrome b6-f complex, which mediates electron transfer between photosystem II (PSII) and photosystem I (PSI), cyclic electron flow around PSI, and state transitions. This is Cytochrome f from Nymphaea alba (White water-lily).